The primary structure comprises 181 residues: MNKYQELVVSKLTNVINNTAEGYDDKILSLVDAAGRTFIGGAGRSLLVSRFFAMRLVHAGYQVSMVGEVVTPSIQAGDLFIVISGSGSTETLMPLVKKAKSQGAKIIVISMKAQSPMAELADLVVPVGGNDANAFDKTHGMPMGTIFELSTLWFLEATIAKLVDQKGLTEEGMRAIHANLE.

The SIS domain occupies I27–L168. Substrate contacts are provided by residues S45 and S84–T89. E148 serves as the catalytic Proton acceptor.

Belongs to the SIS family. PHI subfamily. Homodimer.

It carries out the reaction D-arabino-hex-3-ulose 6-phosphate = beta-D-fructose 6-phosphate. It functions in the pathway one-carbon metabolism; formaldehyde assimilation via RuMP pathway; D-fructose 6-phosphate from D-ribulose 5-phosphate and formaldehyde: step 2/2. Functionally, catalyzes the isomerization between 3-hexulose 6-phosphate and fructose 6-phosphate. The chain is 3-hexulose-6-phosphate isomerase (rmpB) from Methylomonas aminofaciens.